The following is a 67-amino-acid chain: Penaeidin-4c (67 aa).

A signal peptide spans 1–19 (MRLVVCLVFLASFALVCQG). Disulfide bonds link C42–C56, C45–C63, and C57–C64. Arginine amide is present on R66.

Belongs to the penaeidin family.

It is found in the cytoplasmic granule. Antibacterial and antifungal activity. Presents chitin-binding activity. This chain is Penaeidin-4c, found in Penaeus vannamei (Whiteleg shrimp).